We begin with the raw amino-acid sequence, 1149 residues long: Golgi apparatus protein 1 homolog (1149 aa).

Residues 1–19 (MWRFPLILASVCWLTTAQQ) form the signal peptide. Residues 20–1115 (QNVANDPDKK…NLVMEHPERN (1096 aa)) are Extracellular-facing. Cys-rich GLG1 repeat units lie at residues 24-69 (NDPD…FSET), 71-135 (TLSE…KNVT), 139-207 (KCHA…VKNA), 216-276 (ILGD…NDKF), 277-344 (MDPE…NQPE), 349-411 (QPSK…ESRN), 415-475 (KLGA…NVDS), 477-549 (DMVP…YDEQ), 551-610 (PLSV…ETDN), 613-676 (RKHP…DAKE), 677-736 (MNNK…FEHK), 743-803 (DLTD…IECL), 809-867 (HLGP…IVRL), 868-938 (LQRE…RQSI), 945-1009 (DFSP…NKGL), and 1010-1070 (IRDK…DKQE). An N-linked (GlcNAc...) asparagine glycan is attached at Asn-133. N-linked (GlcNAc...) asparagine glycosylation occurs at Asn-411. Residues 1116-1136 (SILGYLAGFIVFILLIGCCCG) form a helical membrane-spanning segment. Residues 1137 to 1149 (RVSKKQYIEMKNR) are Cytoplasmic-facing.

It is found in the membrane. The chain is Golgi apparatus protein 1 homolog from Caenorhabditis elegans.